The following is a 288-amino-acid chain: Short chain aldehyde dehydrogenase 1 (288 aa).

NAD(+) contacts are provided by residues serine 26–isoleucine 28, aspartate 47, aspartate 72–valine 73, and asparagine 99–glycine 101. Serine 153 (proton donor) is an active-site residue. 2 residues coordinate substrate: serine 153 and tyrosine 166. Residues tyrosine 166, lysine 170, and threonine 201 each contribute to the NAD(+) site. Tyrosine 166 acts as the Proton acceptor in catalysis. Lysine 170 (proton donor/acceptor) is an active-site residue.

The protein belongs to the short-chain dehydrogenases/reductases (SDR) family. As to quaternary structure, homodimer. As to expression, expressed in mature seeds.

The enzyme catalyses 4,5,8-trihydroxycasbene + 2 NAD(+) = jolkinol C + 2 NADH + 2 H(+). The catalysed reaction is a secondary alcohol + NAD(+) = a ketone + NADH + H(+). It carries out the reaction a primary alcohol + NAD(+) = an aldehyde + NADH + H(+). It functions in the pathway secondary metabolite biosynthesis; terpenoid biosynthesis. Its function is as follows. Involved in the biosynthesis of macrocyclic lathyrane type diterpenoids (also called Euphorbia factors) natural products, including the cyclization route from casbene to jolkinol C, a precursor for ingenol mebutate that is used to treat actinic keratosis, a precancerous skin condition. Catalyzes the conversion of 4,5,8-trihydroxycasbene into jolkinol C in presence of NAD. Also mediates the formation of casbene dione derivative and 4-ketocasbene from 4-hydroxy-8-ketocasbene and 4-hydroxycasbene, respectively. Together with CYP71D445, triggers the biosynthesis of 8-ketocasbene from 8-hydroxycasbene. In Euphorbia lathyris (Caper spurge), this protein is Short chain aldehyde dehydrogenase 1.